Here is a 141-residue protein sequence, read N- to C-terminus: Hemoglobin subunit alpha (141 aa).

The Globin domain maps to 1–141; the sequence is VLSPADKTNI…VSTVLTSKYR (141 aa). The residue at position 3 (Ser-3) is a Phosphoserine. N6-succinyllysine is present on Lys-7. Residue Thr-8 is modified to Phosphothreonine. Lys-11 bears the N6-succinyllysine mark. An N6-acetyllysine; alternate modification is found at Lys-16. An N6-succinyllysine; alternate modification is found at Lys-16. Phosphotyrosine is present on Tyr-24. Phosphoserine is present on Ser-35. Position 40 is an N6-succinyllysine (Lys-40). Ser-49 carries the post-translational modification Phosphoserine. Position 58 (His-58) interacts with O2. His-87 provides a ligand contact to heme b. Ser-102 is subject to Phosphoserine. Phosphothreonine is present on Thr-108. The residue at position 124 (Ser-124) is a Phosphoserine. Phosphothreonine occurs at positions 134 and 137. The residue at position 138 (Ser-138) is a Phosphoserine.

This sequence belongs to the globin family. In terms of assembly, heterotetramer of two alpha chains and two beta chains. In terms of tissue distribution, red blood cells.

Functionally, involved in oxygen transport from the lung to the various peripheral tissues. Its function is as follows. Hemopressin acts as an antagonist peptide of the cannabinoid receptor CNR1. Hemopressin-binding efficiently blocks cannabinoid receptor CNR1 and subsequent signaling. The polypeptide is Hemoglobin subunit alpha (HBA) (Chrysocyon brachyurus (Maned wolf)).